Here is a 282-residue protein sequence, read N- to C-terminus: 4-diphosphocytidyl-2-C-methyl-D-erythritol kinase (282 aa).

The active site involves Lys-13. ATP is bound at residue 96–106 (PMGGGIGGGSS). Asp-138 is an active-site residue.

The protein belongs to the GHMP kinase family. IspE subfamily.

The catalysed reaction is 4-CDP-2-C-methyl-D-erythritol + ATP = 4-CDP-2-C-methyl-D-erythritol 2-phosphate + ADP + H(+). The protein operates within isoprenoid biosynthesis; isopentenyl diphosphate biosynthesis via DXP pathway; isopentenyl diphosphate from 1-deoxy-D-xylulose 5-phosphate: step 3/6. In terms of biological role, catalyzes the phosphorylation of the position 2 hydroxy group of 4-diphosphocytidyl-2C-methyl-D-erythritol. This chain is 4-diphosphocytidyl-2-C-methyl-D-erythritol kinase, found in Pseudomonas syringae pv. syringae (strain B728a).